The primary structure comprises 236 residues: 7-cyano-7-deazaguanine synthase (236 aa).

ATP is bound at residue F13–L23. Residues C200, C215, C218, and C221 each contribute to the Zn(2+) site.

Belongs to the QueC family. It depends on Zn(2+) as a cofactor.

The catalysed reaction is 7-carboxy-7-deazaguanine + NH4(+) + ATP = 7-cyano-7-deazaguanine + ADP + phosphate + H2O + H(+). It participates in purine metabolism; 7-cyano-7-deazaguanine biosynthesis. In terms of biological role, catalyzes the ATP-dependent conversion of 7-carboxy-7-deazaguanine (CDG) to 7-cyano-7-deazaguanine (preQ(0)). In Parvibaculum lavamentivorans (strain DS-1 / DSM 13023 / NCIMB 13966), this protein is 7-cyano-7-deazaguanine synthase.